A 3391-amino-acid chain; its full sequence is Genome polyprotein (3391 aa).

An interaction with host EXOC1 region spans residues 1-15 (MNNQRKKARSTPFNM). Residues 1 to 101 (MNNQRKKARS…LNILNRRRRT (101 aa)) are Cytoplasmic-facing. Positions 37-72 (MLQGRGPLKLFMALVAFLRFLTIPPTAGILKRWGTI) are hydrophobic; homodimerization of capsid protein C. The propeptide at 101–114 (TAGVIIMLIPTAMA) is ER anchor for the capsid protein C, removed in mature form by serine protease NS3. Residues 102–119 (AGVIIMLIPTAMAFHLTT) traverse the membrane as a helical segment. Topologically, residues 120-241 (RNGEPHMIVG…KHVQRIETWI (122 aa)) are extracellular. Asn183 carries an N-linked (GlcNAc...) asparagine; by host glycan. A helical membrane pass occupies residues 242 to 259 (LRHPGFTIMAAILAYTIG). Topologically, residues 260–265 (TTHFQR) are cytoplasmic. The chain crosses the membrane as a helical span at residues 266 to 280 (ALIFILLTAVAPSMT). The Extracellular portion of the chain corresponds to 281 to 725 (MRCIGISNRD…LHQVFGAIYG (445 aa)). Cystine bridges form between Cys283–Cys310, Cys340–Cys401, Cys354–Cys385, and Cys372–Cys396. An N-linked (GlcNAc...) asparagine; by host glycan is attached at Asn347. Residues 378-391 (DRGWGNGCGLFGKG) form a fusion peptide region. An N-linked (GlcNAc...) asparagine; by host glycan is attached at Asn433. Intrachain disulfides connect Cys465–Cys565 and Cys582–Cys613. The chain crosses the membrane as a helical span at residues 726 to 746 (AAFSGVSWTMKILIGVIITWI). At 747 to 752 (GMNSRS) the chain is on the cytoplasmic side. A helical transmembrane segment spans residues 753–773 (TSLSVSLVLVGVVTLYLGAMV). The Extracellular segment spans residues 774–1195 (QADSGCVVSW…MVGATMTDDI (422 aa)). 6 disulfides stabilise this stretch: Cys779-Cys790, Cys830-Cys918, Cys954-Cys998, Cys1055-Cys1104, Cys1066-Cys1088, and Cys1087-Cys1091. 2 N-linked (GlcNAc...) asparagine; by host glycosylation sites follow: Asn905 and Asn982. An N-linked (GlcNAc...) asparagine; by host glycan is attached at Asn1134. The helical transmembrane segment at 1196 to 1220 (GMGVTYLALLAAFKVRPTFAAGLLL) threads the bilayer. Topologically, residues 1221-1226 (RKLTSK) are cytoplasmic. The helical transmembrane segment at 1227–1245 (ELMMATIGIALLSQSTIPE) threads the bilayer. Topologically, residues 1246–1269 (TILELTDALALGMMVLKIVRNMEK) are lumenal. The helical transmembrane segment at 1270–1290 (YQLAVTIMAILCVPNAVILQN) threads the bilayer. Ala1291 is a topological domain (cytoplasmic). The helical transmembrane segment at 1292–1310 (WKVSCTILAAVSVSPLLLT) threads the bilayer. At 1311–1317 (SSQQKAD) the chain is on the lumenal side. The chain crosses the membrane as a helical span at residues 1318-1338 (WIPLALTIKGLNPTAIFLTTL). The Cytoplasmic segment spans residues 1339 to 1346 (SRTSKKRS). A helical transmembrane segment spans residues 1347–1367 (WPLNEAIMAVGMVSILASSLL). Residues 1368–1370 (KND) lie on the Lumenal side of the membrane. Residues 1371–1391 (IPMTGPLVAGGLLTVCYVLTG) form a helical membrane-spanning segment. The Cytoplasmic segment spans residues 1392–1447 (RSADLELERAADVKWEDQAEISGSSPILSITISEDGSMSIKNEEEEQTLTILIRTG). The interval 1398–1437 (LERAADVKWEDQAEISGSSPILSITISEDGSMSIKNEEEE) is interacts with and activates NS3 protease. Positions 1448–1468 (LLVISGVFPVSIPITAAAWYL) form an intramembrane region, helical. The Cytoplasmic segment spans residues 1469-2147 (WEVKKQRAGV…LSELPETLET (679 aa)). The Peptidase S7 domain occupies 1476-1653 (AGVLWDVPSP…EKSIEDNPEI (178 aa)). Residues His1526, Asp1550, and Ser1610 each act as charge relay system; for serine protease NS3 activity in the active site. A Helicase ATP-binding domain is found at 1655–1811 (DDIFRKKRLT…QSNAPIMDEE (157 aa)). An important for RNA-binding region spans residues 1659 to 1662 (RKKR). 1668–1675 (LHPGAGKT) is an ATP binding site. The DEAH box signature appears at 1759–1762 (DEAH). The 168-residue stretch at 1821–1988 (SGHEWVTDFK…IIPSMFEPER (168 aa)) folds into the Helicase C-terminal domain. Residue Lys1863 is modified to N6-acetyllysine; by host. A helical transmembrane segment spans residues 2148–2168 (LLLLTLLATVTGGIFLFLMSG). The Lumenal segment spans residues 2169 to 2170 (KG). The helical intramembrane region spans 2171–2191 (IGKMTLGMCCIITASILLWYA). Position 2192 (Gln2192) is a topological domain, lumenal. The chain crosses the membrane as a helical span at residues 2193–2213 (IQPHWIAASIILEFFLIVLLI). The Cytoplasmic portion of the chain corresponds to 2214 to 2228 (PEPEKQRTPQDNQLT). The helical transmembrane segment at 2229 to 2249 (YVVIAILTVVAATMANEMGFL) threads the bilayer. Residues 2250 to 2274 (EKTKKDLGLGSITTQESESNILDID) lie on the Lumenal side of the membrane. The segment at residues 2275 to 2295 (LRPASAWTLYAVATTFVTPML) is an intramembrane region (helical). Topologically, residues 2296–2316 (RHSIENSSVNVSLTAIANQAT) are lumenal. Asn2301 and Asn2305 each carry an N-linked (GlcNAc...) asparagine; by host glycan. Positions 2317 to 2337 (VLMGLGKGWPLSKIHIGVPLL) form an intramembrane region, helical. Residues 2338–2347 (AIGCYSQVNP) lie on the Lumenal side of the membrane. A helical transmembrane segment spans residues 2348–2368 (ITLTAALLLLVAHYAIIGPGL). At 2369 to 2413 (QAKATREAQKRAAAGIMKNPTVDGITVIDLDPIPYDPKFEKQLGQ) the chain is on the cytoplasmic side. The chain crosses the membrane as a helical span at residues 2414-2434 (VMLLILCVTQVLMMRTTWALC). Over 2435–2459 (EALTLATGPISTLWEGNPGRFWNTT) the chain is Lumenal. Asn2457 carries N-linked (GlcNAc...) asparagine; by host glycosylation. The helical transmembrane segment at 2460–2480 (IAVSMANIFRGSYLAGAGLLF) threads the bilayer. Residues 2481-3391 (SIMKNTTNTR…REEEEAGVLW (911 aa)) lie on the Cytoplasmic side of the membrane. Residues 2493 to 2755 (TGNIGETLGE…DVDLGSGTRN (263 aa)) enclose the mRNA cap 0-1 NS5-type MT domain. Position 2547 (Ser2547) interacts with S-adenosyl-L-methionine. The residue at position 2547 (Ser2547) is a Phosphoserine. The For 2'-O-MTase activity role is filled by Lys2552. An SUMO-interacting motif motif is present at residues 2568–2571 (VVDL). Residues Gly2577, Trp2578, Thr2595, Lys2596, Asp2622, and Val2623 each coordinate S-adenosyl-L-methionine. Catalysis depends on Asp2637, which acts as the For 2'-O-MTase activity. Position 2638 (Ile2638) interacts with S-adenosyl-L-methionine. Residues Lys2672 and Glu2708 each act as for 2'-O-MTase activity in the active site. Residue Tyr2710 coordinates S-adenosyl-L-methionine. Zn(2+)-binding residues include Glu2929, His2933, Cys2938, and Cys2941. Residues 3020-3169 (AMYADDTAGW…PLDDRFASAL (150 aa)) form the RdRp catalytic domain. Zn(2+)-binding residues include His3203, Cys3219, and Cys3338.

In the N-terminal section; belongs to the class I-like SAM-binding methyltransferase superfamily. mRNA cap 0-1 NS5-type methyltransferase family. Homodimer. Interacts (via N-terminus) with host EXOC1 (via C-terminus); this interaction results in EXOC1 degradation through the proteasome degradation pathway. In terms of assembly, forms heterodimers with envelope protein E in the endoplasmic reticulum and Golgi. As to quaternary structure, homodimer; in the endoplasmic reticulum and Golgi. Interacts with protein prM. Interacts with non-structural protein 1. Homodimer; Homohexamer when secreted. Interacts with envelope protein E. Interacts with host PRKAA1. In terms of assembly, interacts (via N-terminus) with serine protease NS3. As to quaternary structure, forms a heterodimer with serine protease NS3. May form homooligomers. Forms a heterodimer with NS2B. Interacts with NS4B. Interacts with unphosphorylated RNA-directed RNA polymerase NS5; this interaction stimulates RNA-directed RNA polymerase NS5 guanylyltransferase activity. Interacts with host SHFL. In terms of assembly, interacts with host MAVS; this interaction inhibits the synthesis of IFN-beta. Interacts with host SHFL. Interacts with host AUP1; the interaction occurs in the presence of Dengue virus NS4B and induces lipophagy which facilitates production of virus progeny particles. May interact with host SRPRA and SEC61G. As to quaternary structure, interacts with serine protease NS3. Homodimer. Interacts with host STAT2; this interaction inhibits the phosphorylation of the latter, and, when all viral proteins are present (polyprotein), targets STAT2 for degradation. Interacts with serine protease NS3. Interacts with host PAF1 complex; the interaction may prevent the recruitment of the PAF1 complex to interferon-responsive genes, and thus reduces the immune response. Post-translationally, specific enzymatic cleavages in vivo yield mature proteins. Cleavages in the lumen of endoplasmic reticulum are performed by host signal peptidase, whereas cleavages in the cytoplasmic side are performed by serine protease NS3. Signal cleavage at the 2K-4B site requires a prior NS3 protease-mediated cleavage at the 4A-2K site. Cleaved in post-Golgi vesicles by a host furin, releasing the mature small envelope protein M, and peptide pr. This cleavage is incomplete as up to 30% of viral particles still carry uncleaved prM. In terms of processing, N-glycosylated. Post-translationally, N-glycosylated. The excreted form is glycosylated and this is required for efficient secretion of the protein from infected cells. Acetylated by host KAT5. Acetylation modulates NS3 RNA-binding and unwinding activities and plays an important positive role for viral replication. In terms of processing, sumoylation of RNA-directed RNA polymerase NS5 increases NS5 protein stability allowing proper viral RNA replication. Post-translationally, phosphorylated on serines residues. This phosphorylation may trigger NS5 nuclear localization.

It is found in the virion. The protein resides in the host nucleus. Its subcellular location is the host cytoplasm. The protein localises to the host perinuclear region. It localises to the secreted. It is found in the virion membrane. The protein resides in the host endoplasmic reticulum membrane. Its subcellular location is the host mitochondrion. The enzyme catalyses Selective hydrolysis of -Xaa-Xaa-|-Yaa- bonds in which each of the Xaa can be either Arg or Lys and Yaa can be either Ser or Ala.. It carries out the reaction RNA(n) + a ribonucleoside 5'-triphosphate = RNA(n+1) + diphosphate. It catalyses the reaction a ribonucleoside 5'-triphosphate + H2O = a ribonucleoside 5'-diphosphate + phosphate + H(+). The catalysed reaction is ATP + H2O = ADP + phosphate + H(+). The enzyme catalyses a 5'-end (5'-triphosphoguanosine)-ribonucleoside in mRNA + S-adenosyl-L-methionine = a 5'-end (N(7)-methyl 5'-triphosphoguanosine)-ribonucleoside in mRNA + S-adenosyl-L-homocysteine. It carries out the reaction a 5'-end (N(7)-methyl 5'-triphosphoguanosine)-ribonucleoside in mRNA + S-adenosyl-L-methionine = a 5'-end (N(7)-methyl 5'-triphosphoguanosine)-(2'-O-methyl-ribonucleoside) in mRNA + S-adenosyl-L-homocysteine + H(+). Functionally, plays a role in virus budding by binding to the cell membrane and gathering the viral RNA into a nucleocapsid that forms the core of a mature virus particle. During virus entry, may induce genome penetration into the host cytoplasm after hemifusion induced by the surface proteins. Can migrate to the cell nucleus where it modulates host functions. Overcomes the anti-viral effects of host EXOC1 by sequestering and degrading the latter through the proteasome degradation pathway. Inhibits RNA silencing by interfering with host Dicer. Its function is as follows. Prevents premature fusion activity of envelope proteins in trans-Golgi by binding to envelope protein E at pH6.0. After virion release in extracellular space, gets dissociated from E dimers. In terms of biological role, acts as a chaperone for envelope protein E during intracellular virion assembly by masking and inactivating envelope protein E fusion peptide. prM is the only viral peptide matured by host furin in the trans-Golgi network probably to avoid catastrophic activation of the viral fusion activity in acidic Golgi compartment prior to virion release. prM-E cleavage is inefficient, and many virions are only partially matured. These uncleaved prM would play a role in immune evasion. Functionally, may play a role in virus budding. Exerts cytotoxic effects by activating a mitochondrial apoptotic pathway through M ectodomain. May display a viroporin activity. Binds to host cell surface receptor and mediates fusion between viral and cellular membranes. Envelope protein is synthesized in the endoplasmic reticulum in the form of heterodimer with protein prM. They play a role in virion budding in the ER, and the newly formed immature particle is covered with 60 spikes composed of heterodimer between precursor prM and envelope protein E. The virion is transported to the Golgi apparatus where the low pH causes dissociation of PrM-E heterodimers and formation of E homodimers. prM-E cleavage is inefficient, and many virions are only partially matured. These uncleaved prM would play a role in immune evasion. Its function is as follows. Involved in immune evasion, pathogenesis and viral replication. Once cleaved off the polyprotein, is targeted to three destinations: the viral replication cycle, the plasma membrane and the extracellular compartment. Essential for viral replication. Required for formation of the replication complex and recruitment of other non-structural proteins to the ER-derived membrane structures. Excreted as a hexameric lipoparticle that plays a role against host immune response. Antagonizing the complement function. Binds to the host macrophages and dendritic cells. Inhibits signal transduction originating from Toll-like receptor 3 (TLR3). In terms of biological role, involved in immune evasion, pathogenesis and viral replication. Once cleaved off the polyprotein, is targeted to three destinations: the viral replication cycle, the plasma membrane and the extracellular compartment. Essential for viral replication. Required for formation of the replication complex and recruitment of other non-structural proteins to the ER-derived membrane structures. Excreted as a hexameric lipoparticle that plays a role against host immune response. Antagonizing the complement function. Binds to the host macrophages and dendritic cells. Inhibits signal transduction originating from Toll-like receptor 3 (TLR3). Mediates complement activation, which may contribute to the pathogenesis of the vascular leakage that occurs in severe dengue disease. Activates autophagy through the AMPK/ERK/mTOR signaling pathway. Mechanistically, acts as the assembly platform for STK11-AMPK interactions and promotes STK11-AMPK interactions. In turn, promotes phosphorylation of the AMPK kinase structural domain and activates AMPK, thereby positively regulating the AMPK/ERK/mTOR signaling pathway and inducing autophagy. Functionally, component of the viral RNA replication complex that functions in virion assembly and antagonizes the host immune response. Required cofactor for the serine protease function of NS3. May have membrane-destabilizing activity and form viroporins. Its function is as follows. Displays three enzymatic activities: serine protease, NTPase and RNA helicase. NS3 serine protease, in association with NS2B, performs its autocleavage and cleaves the polyprotein at dibasic sites in the cytoplasm: C-prM, NS2A-NS2B, NS2B-NS3, NS3-NS4A, NS4A-2K and NS4B-NS5. NS3 RNA helicase binds RNA and unwinds dsRNA in the 3' to 5' direction. In terms of biological role, regulates the ATPase activity of the NS3 helicase activity. NS4A allows NS3 helicase to conserve energy during unwinding. Plays a role in the inhibition of the host innate immune response. Interacts with host MAVS and thereby prevents the interaction between RIGI and MAVS. In turn, IFN-beta production is impaired. Interacts with host AUP1 which mediates induction of lipophagy in host cells and facilitates production of virus progeny particles. Functionally, functions as a signal peptide for NS4B and is required for the interferon antagonism activity of the latter. Induces the formation of ER-derived membrane vesicles where the viral replication takes place. Inhibits interferon (IFN)-induced host STAT1 phosphorylation and nuclear translocation, thereby preventing the establishment of cellular antiviral state by blocking the IFN-alpha/beta pathway. Its function is as follows. Replicates the viral (+) and (-) RNA genome, and performs the capping of genomes in the cytoplasm. NS5 methylates viral RNA cap at guanine N-7 and ribose 2'-O positions. Besides its role in RNA genome replication, also prevents the establishment of cellular antiviral state by blocking the interferon-alpha/beta (IFN-alpha/beta) signaling pathway. Inhibits host TYK2 and STAT2 phosphorylation, thereby preventing activation of JAK-STAT signaling pathway. May reduce immune responses by preventing the recruitment of the host PAF1 complex to interferon-responsive genes. This Dengue virus type 2 (strain Jamaica/1409/1983) (DENV-2) protein is Genome polyprotein.